An 826-amino-acid polypeptide reads, in one-letter code: Lysine-specific histone demethylase 1B (826 aa).

A compositionally biased stretch (basic residues) spans 1–11 (MAASRGRSKKR). A disordered region spans residues 1–46 (MAASRGRSKKRSNLELSPDNLPLRSSGRQAKKKAVEIPDEDEDGSS). Serine 17 and serine 26 each carry phosphoserine. Zn(2+)-binding residues include cysteine 53, cysteine 58, cysteine 65, cysteine 73, histidine 84, histidine 90, cysteine 92, cysteine 95, cysteine 142, cysteine 147, cysteine 169, and cysteine 185. The CW-type zinc finger occupies 133 to 193 (DQQLPYWVQC…HCSFPEDLRV (61 aa)). Phosphoserine is present on serine 253. The interval 279 to 298 (YQPNECGKALCVRPDVMELD) is GLYR1-binding. One can recognise an SWIRM domain in the interval 281-379 (PNECGKALCV…TGVLTVAAGQ (99 aa)). FAD is bound at residue 389–445 (KSVLVVGAGPAGLAAARQLHNFGMKVTVLEAKDRIGGRVWDDKSFKGVVVGRGPQIV). Histone H3-binding regions lie at residues 444–473 (IVNG…RCDL), 493–504 (FNALLDVVSEWR), and 544–578 (FHLS…AGDH). The tract at residues 570–572 (FFA) is GLYR1-binding. FAD contacts are provided by residues valine 604, glutamate 799, and 807-809 (QTV). The GLYR1-binding stretch occupies residues 802 to 818 (NRHFPQTVTGAYLSGVR).

Belongs to the flavin monoamine oxidase family. Interacts with its cofactor GLYR1 at nucleosomes; this interaction stimulates H3K4me1 and H3K4me2 demethylation. In contrast to KDM1A, does not form a complex with RCOR1/CoREST. Possible accessory component of the polycomb repressive deubiquitinase (PR-DUB) complex, at least composed of BAP1, one of ASXL1, ASXL2 or (probably) ASXL3 and one of MBD5 or MBD6. The PR-DUB core associates with a number of accessory proteins, including FOXK1, FOXK2, KDM1B, HCFC1 and OGT; KDM1B specifically associates with ASXL2 PR-DUB complexes. FAD serves as cofactor. It depends on Zn(2+) as a cofactor. In terms of tissue distribution, expressed in growing oocytes and in intestinal gland.

It localises to the nucleus. The protein localises to the chromosome. The catalysed reaction is N(6),N(6)-dimethyl-L-lysyl(4)-[histone H3] + 2 A + 2 H2O = L-lysyl(4)-[histone H3] + 2 formaldehyde + 2 AH2. It carries out the reaction N(6)-methyl-L-lysyl(4)-[histone H3] + A + H2O = L-lysyl(4)-[histone H3] + formaldehyde + AH2. With respect to regulation, inhibited by tranylcypromine, but not by pargyline, deprenyl or rasagiline. Histone H3K4me1 and H3K4me2 demethylase activity is inhibited by DNA, this inhibition is released in complex with GLYR1. In terms of biological role, histone demethylase that demethylates 'Lys-4' of histone H3, a specific tag for epigenetic transcriptional activation, thereby acting as a corepressor. Required for de novo DNA methylation of a subset of imprinted genes during oogenesis. Acts by oxidizing the substrate by FAD to generate the corresponding imine that is subsequently hydrolyzed. Demethylates both mono- and di-methylated 'Lys-4' of histone H3. Has no effect on tri-methylated 'Lys-4', mono-, di- or tri-methylated 'Lys-9', mono-, di- or tri-methylated 'Lys-27', mono-, di- or tri-methylated 'Lys-36' of histone H3, or on mono-, di- or tri-methylated 'Lys-20' of histone H4. Histone demethylase that demethylates 'Lys-4' of histone H3, a specific tag for epigenetic transcriptional activation, thereby acting as a corepressor. Required for de novo DNA methylation of a subset of imprinted genes during oogenesis. Acts by oxidizing the substrate by FAD to generate the corresponding imine that is subsequently hydrolyzed. Demethylates both mono- and di-methylated 'Lys-4' of histone H3. Has no effect on tri-methylated 'Lys-4', mono-, di- or tri-methylated 'Lys-9', mono-, di- or tri-methylated 'Lys-27', mono-, di- or tri-methylated 'Lys-36' of histone H3, or on mono-, di- or tri-methylated 'Lys-20' of histone H4. Alone, it is unable to demethylate H3K4me on nucleosomes and requires the presence of GLYR1 to achieve such activity, they form a multifunctional enzyme complex that modifies transcribed chromatin and facilitates Pol II transcription through nucleosomes. The protein is Lysine-specific histone demethylase 1B of Mus musculus (Mouse).